Consider the following 403-residue polypeptide: MSSLSNSLPLMEDVQGIRKAQKADGTATVMAIGTAHPPHIFPQDTYADVYFRATNSEHKVELKKKFDHICKKTMIGKRYFNYDEEFLKKYPNITSYDEPSLNDRQDICVPGVPALGTEAAVKAIEEWGRPKSEITHLVFCTSCGVDMPSADFQCAKLLGLHANVNKYCIYMQGCYAGGTVMRYAKDLAENNRGARVLVVCAELTIMMLRAPNETHLDNAIGISLFGDGAAALIIGSDPIIGVEKPMFEIVCTKQTVIPNTEDVIHLHLRETGMMFYLSKGSPMTISNNVEACLIDVFKSVGITPPEDWNSLFWIPHPGGRAILDQVEAKLKLRPEKFRAARTVLWDYGNMVSASVGYILDEMRRKSAAKGLETYGEGLEWGVLLGFGPGITVETILLHSLPLM.

CoA is bound at residue histidine 68. Cysteine 174 is a catalytic residue. Position 174 is a cysteine sulfinic acid (-SO2H) (cysteine 174). CoA-binding positions include leucine 277, serine 281, and glycine 318–alanine 321.

It belongs to the thiolase-like superfamily. Chalcone/stilbene synthases family. Homodimer.

The catalysed reaction is 5 malonyl-CoA + 4 H(+) = 5,7-dihydroxy-2-methyl-4H-chromen-4-one + 5 CO2 + 5 CoA + H2O. It functions in the pathway secondary metabolite biosynthesis; flavonoid biosynthesis. Catalyzes the iterative condensations of 5 molecules of malonyl-CoA to produce a pentaketide 5,7-dihydroxy-2-methylchromone. This chain is 5,7-dihydroxy-2-methylchromone synthase, found in Aloe arborescens (Kidachi aloe).